Here is a 147-residue protein sequence, read N- to C-terminus: 3-dehydroquinate dehydratase (147 aa).

Tyrosine 24 functions as the Proton acceptor in the catalytic mechanism. The substrate site is built by asparagine 75, histidine 81, and aspartate 88. Histidine 101 functions as the Proton donor in the catalytic mechanism. Residues 102-103 (IS) and arginine 112 each bind substrate.

This sequence belongs to the type-II 3-dehydroquinase family. As to quaternary structure, homododecamer.

The catalysed reaction is 3-dehydroquinate = 3-dehydroshikimate + H2O. It participates in metabolic intermediate biosynthesis; chorismate biosynthesis; chorismate from D-erythrose 4-phosphate and phosphoenolpyruvate: step 3/7. Catalyzes a trans-dehydration via an enolate intermediate. The chain is 3-dehydroquinate dehydratase from Cereibacter sphaeroides (strain ATCC 17029 / ATH 2.4.9) (Rhodobacter sphaeroides).